The chain runs to 292 residues: Phosphatidylserine decarboxylase proenzyme (292 aa).

Residues Asp92, His149, and Ser256 each act as charge relay system; for autoendoproteolytic cleavage activity in the active site. Ser256 (schiff-base intermediate with substrate; via pyruvic acid; for decarboxylase activity) is an active-site residue. Ser256 bears the Pyruvic acid (Ser); by autocatalysis mark.

This sequence belongs to the phosphatidylserine decarboxylase family. PSD-B subfamily. Prokaryotic type I sub-subfamily. As to quaternary structure, heterodimer of a large membrane-associated beta subunit and a small pyruvoyl-containing alpha subunit. Pyruvate serves as cofactor. In terms of processing, is synthesized initially as an inactive proenzyme. Formation of the active enzyme involves a self-maturation process in which the active site pyruvoyl group is generated from an internal serine residue via an autocatalytic post-translational modification. Two non-identical subunits are generated from the proenzyme in this reaction, and the pyruvate is formed at the N-terminus of the alpha chain, which is derived from the carboxyl end of the proenzyme. The autoendoproteolytic cleavage occurs by a canonical serine protease mechanism, in which the side chain hydroxyl group of the serine supplies its oxygen atom to form the C-terminus of the beta chain, while the remainder of the serine residue undergoes an oxidative deamination to produce ammonia and the pyruvoyl prosthetic group on the alpha chain. During this reaction, the Ser that is part of the protease active site of the proenzyme becomes the pyruvoyl prosthetic group, which constitutes an essential element of the active site of the mature decarboxylase.

Its subcellular location is the cell membrane. It carries out the reaction a 1,2-diacyl-sn-glycero-3-phospho-L-serine + H(+) = a 1,2-diacyl-sn-glycero-3-phosphoethanolamine + CO2. The protein operates within phospholipid metabolism; phosphatidylethanolamine biosynthesis; phosphatidylethanolamine from CDP-diacylglycerol: step 2/2. Catalyzes the formation of phosphatidylethanolamine (PtdEtn) from phosphatidylserine (PtdSer). The sequence is that of Phosphatidylserine decarboxylase proenzyme from Baumannia cicadellinicola subsp. Homalodisca coagulata.